A 684-amino-acid chain; its full sequence is Threonine--tRNA ligase (684 aa).

The TGS domain maps to 1-66; that stretch reads MTVPATDSCP…DTDAEVVPVA (66 aa). The tract at residues 261 to 567 is catalytic; sequence DHRKLGSELD…LTEHYAGAFP (307 aa). 3 residues coordinate Zn(2+): C366, H417, and H544.

It belongs to the class-II aminoacyl-tRNA synthetase family. As to quaternary structure, homodimer. The cofactor is Zn(2+).

The protein localises to the cytoplasm. The catalysed reaction is tRNA(Thr) + L-threonine + ATP = L-threonyl-tRNA(Thr) + AMP + diphosphate + H(+). Its function is as follows. Catalyzes the attachment of threonine to tRNA(Thr) in a two-step reaction: L-threonine is first activated by ATP to form Thr-AMP and then transferred to the acceptor end of tRNA(Thr). Also edits incorrectly charged L-seryl-tRNA(Thr). The protein is Threonine--tRNA ligase of Mycolicibacterium paratuberculosis (strain ATCC BAA-968 / K-10) (Mycobacterium paratuberculosis).